A 498-amino-acid chain; its full sequence is MASQGTKRSYEQMETGGERQNATEIRASVGRMVGGIGRFYIQMCTELKLSDYEGRLIQNSITIERMVLSAFDERRNKYLEEHPSAGKDPKKTGGPIYRRRDGKWMRELILYDKEEIRRIWRQANNGEDATAGLTHLMIWHSNLNDATYQRTRALVRTGMDPRMCSLMQGSTLPRRSGAAGAAVKGVGTMVLELIRMIKRGINDRNFWRGENGRRTRIAYERMCNILKGKFQTAAQRAMMDQVRESRNPGNAEIEDLIFLARSALILRGSVAHKSCLPACVYGLAVASGYDFEREGYSLVGIDPFRLLQNSQVFSLIRPNENPAHKSQLVWMACHSAAFEDLRVSSFIRGTRVVPRGQLSTRGVQIASNENMETMDSSTLELRSRYWAIRTRSGGNTNQQRASAGQISVQPTFSVQRNLPFERATIMAAFTGNTEGRTSDMRTEIIRMMENASPEDVSFQGRGVFELSDEKATNPIVPSFDMSNEGSYFFGDSAEEYDN.

A Unconventional nuclear localization signal motif is present at residues 1 to 18 (MASQGTKRSYEQMETGGE). The interval 1–21 (MASQGTKRSYEQMETGGERQN) is disordered. Positions 198-216 (KRGINDRNFWRGENGRRTR) match the Bipartite nuclear localization signal motif.

The protein belongs to the influenza viruses nucleoprotein family. As to quaternary structure, homomultimerizes to form the nucleocapsid. May bind host exportin-1/XPO1. Binds to viral genomic RNA. Protein-RNA contacts are mediated by a combination of electrostatic interactions between positively charged residues and the phosphate backbone and planar interactions between aromatic side chains and bases. In terms of processing, late in virus-infected cells, may be cleaved from a 56-kDa protein to a 53-kDa protein by a cellular caspase. This cleavage might be a marker for the onset of apoptosis in infected cells or have a specific function in virus host interaction.

It is found in the virion. The protein resides in the host nucleus. Encapsidates the negative strand viral RNA, protecting it from nucleases. The encapsidated genomic RNA is termed the ribonucleoprotein (RNP) and serves as template for transcription and replication. The RNP needs to be localized in the host nucleus to start an infectious cycle, but is too large to diffuse through the nuclear pore complex. NP comprises at least 2 nuclear localization signals that are responsible for the active RNP import into the nucleus through cellular importin alpha/beta pathway. Later in the infection, nclear export of RNPs are mediated through viral proteins NEP interacting with M1 which binds nucleoproteins. It is possible that nucleoprotein binds directly host exportin-1/XPO1 and plays an active role in RNPs nuclear export. M1 interaction with RNP seems to hide nucleoprotein's nuclear localization signals. Soon after a virion infects a new cell, M1 dissociates from the RNP under acidification of the virion driven by M2 protein. Dissociation of M1 from RNP unmasks nucleoprotein's nuclear localization signals, targeting the RNP to the nucleus. The sequence is that of Nucleoprotein from Aves (Pig).